A 438-amino-acid chain; its full sequence is tRNA modification GTPase MnmE (438 aa).

Arg20, Glu78, and Lys117 together coordinate (6S)-5-formyl-5,6,7,8-tetrahydrofolate. The 146-residue stretch at 214–359 folds into the TrmE-type G domain; sequence GIRVLIIGKP…LIDEIKKLFY (146 aa). Asn224 contacts K(+). Residues 224–229, 243–249, and 268–271 each bind GTP; these read NVGKST, TDIPGTT, and DTAG. Ser228 is a Mg(2+) binding site. Residues Thr243, Ile245, and Thr248 each coordinate K(+). Residue Thr249 coordinates Mg(2+). Lys438 is a binding site for (6S)-5-formyl-5,6,7,8-tetrahydrofolate.

It belongs to the TRAFAC class TrmE-Era-EngA-EngB-Septin-like GTPase superfamily. TrmE GTPase family. In terms of assembly, homodimer. Heterotetramer of two MnmE and two MnmG subunits. It depends on K(+) as a cofactor.

The protein resides in the cytoplasm. Functionally, exhibits a very high intrinsic GTPase hydrolysis rate. Involved in the addition of a carboxymethylaminomethyl (cmnm) group at the wobble position (U34) of certain tRNAs, forming tRNA-cmnm(5)s(2)U34. In Ureaplasma parvum serovar 3 (strain ATCC 27815 / 27 / NCTC 11736), this protein is tRNA modification GTPase MnmE.